A 347-amino-acid chain; its full sequence is Holliday junction branch migration complex subunit RuvB (347 aa).

A large ATPase domain (RuvB-L) region spans residues 1 to 183 (MTDVPRMVTP…FGIPVRLNFY (183 aa)). Residues leucine 22, arginine 23, glycine 64, lysine 67, threonine 68, threonine 69, 130–132 (EDF), arginine 173, tyrosine 183, and arginine 220 each bind ATP. Mg(2+) is bound at residue threonine 68. A small ATPAse domain (RuvB-S) region spans residues 184–254 (TVDELEKIVS…IADHALGALE (71 aa)). Residues 257–347 (AAGLDAMDRR…QFGLFGGEDE (91 aa)) form a head domain (RuvB-H) region. DNA is bound by residues arginine 293, arginine 312, and arginine 317.

Belongs to the RuvB family. Homohexamer. Forms an RuvA(8)-RuvB(12)-Holliday junction (HJ) complex. HJ DNA is sandwiched between 2 RuvA tetramers; dsDNA enters through RuvA and exits via RuvB. An RuvB hexamer assembles on each DNA strand where it exits the tetramer. Each RuvB hexamer is contacted by two RuvA subunits (via domain III) on 2 adjacent RuvB subunits; this complex drives branch migration. In the full resolvosome a probable DNA-RuvA(4)-RuvB(12)-RuvC(2) complex forms which resolves the HJ.

It is found in the cytoplasm. It catalyses the reaction ATP + H2O = ADP + phosphate + H(+). Functionally, the RuvA-RuvB-RuvC complex processes Holliday junction (HJ) DNA during genetic recombination and DNA repair, while the RuvA-RuvB complex plays an important role in the rescue of blocked DNA replication forks via replication fork reversal (RFR). RuvA specifically binds to HJ cruciform DNA, conferring on it an open structure. The RuvB hexamer acts as an ATP-dependent pump, pulling dsDNA into and through the RuvAB complex. RuvB forms 2 homohexamers on either side of HJ DNA bound by 1 or 2 RuvA tetramers; 4 subunits per hexamer contact DNA at a time. Coordinated motions by a converter formed by DNA-disengaged RuvB subunits stimulates ATP hydrolysis and nucleotide exchange. Immobilization of the converter enables RuvB to convert the ATP-contained energy into a lever motion, pulling 2 nucleotides of DNA out of the RuvA tetramer per ATP hydrolyzed, thus driving DNA branch migration. The RuvB motors rotate together with the DNA substrate, which together with the progressing nucleotide cycle form the mechanistic basis for DNA recombination by continuous HJ branch migration. Branch migration allows RuvC to scan DNA until it finds its consensus sequence, where it cleaves and resolves cruciform DNA. This Nitrobacter hamburgensis (strain DSM 10229 / NCIMB 13809 / X14) protein is Holliday junction branch migration complex subunit RuvB.